The chain runs to 71 residues: Large ribosomal subunit protein bL31 (71 aa).

Zn(2+)-binding residues include cysteine 16, cysteine 18, cysteine 36, and cysteine 39.

This sequence belongs to the bacterial ribosomal protein bL31 family. Type A subfamily. As to quaternary structure, part of the 50S ribosomal subunit. The cofactor is Zn(2+).

Functionally, binds the 23S rRNA. The sequence is that of Large ribosomal subunit protein bL31 from Pseudothermotoga lettingae (strain ATCC BAA-301 / DSM 14385 / NBRC 107922 / TMO) (Thermotoga lettingae).